The chain runs to 122 residues: Glycine cleavage system H protein (122 aa).

One can recognise a Lipoyl-binding domain in the interval 19-101; sequence TATIGITKHA…EGNSWLYKIK (83 aa). N6-lipoyllysine is present on Lys-60.

The protein belongs to the GcvH family. As to quaternary structure, the glycine cleavage system is composed of four proteins: P, T, L and H. (R)-lipoate serves as cofactor.

Functionally, the glycine cleavage system catalyzes the degradation of glycine. The H protein shuttles the methylamine group of glycine from the P protein to the T protein. The chain is Glycine cleavage system H protein from Dinoroseobacter shibae (strain DSM 16493 / NCIMB 14021 / DFL 12).